A 365-amino-acid polypeptide reads, in one-letter code: MTENITTETRPSIYGLTRDQLIEWAIENGEKKFRATQVWDWLYRKRVQSFEEMSNLSAVFIDKLNEAFILNPLEQVVVQESADGTVKYLFMLPDKVMIETVLMRQSYGLSVCVTTQVGCNMGCTFCASGILKKERDVTAGEIVSQIMLVQKYFDERGLDERVSHVVVMGIGEPFDNYEHLMNFLRVINDDNGLAIGARHITVSTCGFMPAKIKEFAHDNLQINLAISLHAPNNELRTSLMRITRNAPLEKLFEAIDYYTETTNRRVTYEYIMLSGENDSPEIAQQLADLIKSRNKLSYVNLIPYNPVAEHIKYERSTKDNTAKFYDVLKKNGINCVVRQEHGTDIDAACGQLRSKQIKKNKAKLA.

Glutamate 99 serves as the catalytic Proton acceptor. A Radical SAM core domain is found at 105–344 (QSYGLSVCVT…CVVRQEHGTD (240 aa)). A disulfide bridge links cysteine 112 with cysteine 349. The [4Fe-4S] cluster site is built by cysteine 119, cysteine 123, and cysteine 126. S-adenosyl-L-methionine contacts are provided by residues 171-172 (GE), serine 203, 227-229 (SLH), and asparagine 305. The S-methylcysteine intermediate role is filled by cysteine 349.

This sequence belongs to the radical SAM superfamily. RlmN family. Requires [4Fe-4S] cluster as cofactor.

The protein resides in the cytoplasm. The catalysed reaction is adenosine(2503) in 23S rRNA + 2 reduced [2Fe-2S]-[ferredoxin] + 2 S-adenosyl-L-methionine = 2-methyladenosine(2503) in 23S rRNA + 5'-deoxyadenosine + L-methionine + 2 oxidized [2Fe-2S]-[ferredoxin] + S-adenosyl-L-homocysteine. The enzyme catalyses adenosine(37) in tRNA + 2 reduced [2Fe-2S]-[ferredoxin] + 2 S-adenosyl-L-methionine = 2-methyladenosine(37) in tRNA + 5'-deoxyadenosine + L-methionine + 2 oxidized [2Fe-2S]-[ferredoxin] + S-adenosyl-L-homocysteine. Functionally, specifically methylates position 2 of adenine 2503 in 23S rRNA and position 2 of adenine 37 in tRNAs. The protein is Probable dual-specificity RNA methyltransferase RlmN of Lactococcus lactis subsp. cremoris (strain MG1363).